Here is an 84-residue protein sequence, read N- to C-terminus: Neurotoxin BmK-M11 (84 aa).

Residues 1-19 (MNYLVMISFALLLMTGVES) form the signal peptide. The region spanning 21-83 (RDAYIAKPEN…VPIRVPGKCH (63 aa)) is the LCN-type CS-alpha/beta domain. Disulfide bonds link C31/C82, C35/C55, C41/C65, and C45/C67. R84 is a propeptide (removed by a carboxypeptidase).

This sequence belongs to the long (4 C-C) scorpion toxin superfamily. Sodium channel inhibitor family. Alpha subfamily. Expressed by the venom gland.

The protein localises to the secreted. In terms of biological role, alpha toxins bind voltage-independently at site-3 of sodium channels (Nav) and inhibit the inactivation of the activated channels, thereby blocking neuronal transmission. This recombinant toxin selectively inhibits the fast inactivation of mNav1.4/SCN4A (EC(50)=82.3 nM) (tested in HEK293 cells). This chain is Neurotoxin BmK-M11, found in Olivierus martensii (Manchurian scorpion).